The primary structure comprises 307 residues: Capsid assembly scaffolding protein (307 aa).

2 stretches are compositionally biased toward acidic residues: residues 45–54 (IELASDEVET) and 83–101 (EPTD…EGSE). A disordered region spans residues 45-105 (IELASDEVET…GTEGSEEFTP (61 aa)).

The protein belongs to the T7likevirus capsid assembly scaffolding protein family.

Scaffolding protein involved in the icosahedric procapsid assembly. Coassembles with the capsid proteins to form the procapsid, in which the scaffolding protein is found within the external shell of icosahedrally arranged capsid protein subunits. In a subsequent step the scaffolding protein molecules are released from the procapsid. Facilitates assembly by binding to gp10 hexamers but not the pentamers and locking them into a morphogenically correct conformation. This Escherichia coli (Bacteriophage T7) protein is Capsid assembly scaffolding protein.